The following is a 204-amino-acid chain: Methyl-CpG-binding domain-containing protein 1 (204 aa).

The interval 1–46 (MLPFPAMNLKKSRSENSSVASSGSKIEEQTEKSAEPTTIKVQKKAG) is disordered. Over residues 15–24 (ENSSVASSGS) the composition is skewed to polar residues. Positions 25-34 (KIEEQTEKSA) are enriched in basic and acidic residues. The CW-type zinc finger occupies 49–104 (GRSIDVFAVQCEKCMKWRKIDTQDEYEDIRSRVQEDPFFCKTKEGVSCEDVGDLNY). An MBD-associated domain (MAD) motif is present at residues 58-96 (QCEKCMKWRKIDTQDEYEDIRSRVQEDPFFCKTKEGVSC). Residues Cys-59, Cys-62, Cys-88, and Cys-96 each coordinate Zn(2+). Residues 110–180 (WVIDKPGLPR…GDFNFTVPKV (71 aa)) enclose the MBD domain.

As to expression, mostly expressed in flowers and buds.

The protein resides in the nucleus. Probable transcriptional regulator. This is Methyl-CpG-binding domain-containing protein 1 (MBD1) from Arabidopsis thaliana (Mouse-ear cress).